Consider the following 418-residue polypeptide: Light-independent protochlorophyllide reductase subunit N (418 aa).

[4Fe-4S] cluster-binding residues include cysteine 17, cysteine 42, and cysteine 103.

Belongs to the BchN/ChlN family. As to quaternary structure, protochlorophyllide reductase is composed of three subunits; ChlL, ChlN and ChlB. Forms a heterotetramer of two ChlB and two ChlN subunits. Requires [4Fe-4S] cluster as cofactor.

The enzyme catalyses chlorophyllide a + oxidized 2[4Fe-4S]-[ferredoxin] + 2 ADP + 2 phosphate = protochlorophyllide a + reduced 2[4Fe-4S]-[ferredoxin] + 2 ATP + 2 H2O. It functions in the pathway porphyrin-containing compound metabolism; chlorophyll biosynthesis (light-independent). In terms of biological role, component of the dark-operative protochlorophyllide reductase (DPOR) that uses Mg-ATP and reduced ferredoxin to reduce ring D of protochlorophyllide (Pchlide) to form chlorophyllide a (Chlide). This reaction is light-independent. The NB-protein (ChlN-ChlB) is the catalytic component of the complex. This chain is Light-independent protochlorophyllide reductase subunit N, found in Prochlorococcus marinus (strain AS9601).